A 276-amino-acid polypeptide reads, in one-letter code: Cell wall synthesis protein KRE9 (276 aa).

An N-terminal signal peptide occupies residues 1–21 (MRLQRNSIICALVFLVSFVLG).

It belongs to the KRE9/KNH1 family. In terms of processing, O-glycosylated.

The protein resides in the secreted. Its subcellular location is the cell wall. Functionally, involved in cell wall beta(1-&gt;6) glucan synthesis. This is Cell wall synthesis protein KRE9 from Saccharomyces cerevisiae (strain ATCC 204508 / S288c) (Baker's yeast).